The chain runs to 321 residues: MIFVTLEHILTHISFSIISIVITIHLMTLLIHKIAGLCDSSEKGIISTFFSITGLLITRWIYSGHFPLSNLYESLIFLSWSFSIIHMIPYLRNHKNDLSVITVPSVIFTQGFVTSCLSTEMRQSAILVPALKSQWLIMHVSMMLLSYATLLCGSLLSVALLVITFRKNMDIFCKRKNFLIKSFFFAETEYLNKKRSVFKNTSFLSFRNYYKYQLTQRLDYWTYRIISLGFIFLTMGILSGAVWANEAWGSYWNWDPKETWAFITWTIFAIYSHIRININFQGTNPALVASIGFLIIWICYFGINLLGIGLHSYGSFTLPSN.

Transmembrane regions (helical) follow at residues 9–29 (ILTHISFSIISIVITIHLMTL), 44–64 (GIISTFFSITGLLITRWIYSG), 71–91 (LYESLIFLSWSFSIIHMIPYL), 98–118 (LSVITVPSVIFTQGFVTSCLS), 143–163 (MLLSYATLLCGSLLSVALLVI), 225–245 (IISLGFIFLTMGILSGAVWAN), 260–280 (WAFITWTIFAIYSHIRININF), and 288–308 (VASIGFLIIWICYFGINLLGI).

It belongs to the CcmF/CycK/Ccl1/NrfE/CcsA family. May interact with Ccs1.

Its subcellular location is the plastid. The protein resides in the chloroplast thylakoid membrane. In terms of biological role, required during biogenesis of c-type cytochromes (cytochrome c6 and cytochrome f) at the step of heme attachment. The protein is Cytochrome c biogenesis protein CcsA of Dioscorea elephantipes (Elephant's foot yam).